The following is a 742-amino-acid chain: Phosphoribosylformylglycinamidine synthase subunit PurL (742 aa).

Residue His53 is part of the active site. Residues Tyr56 and Lys95 each contribute to the ATP site. Glu97 serves as a coordination point for Mg(2+). Substrate is bound by residues 98-101 (SHNH) and Arg120. Residue His99 is the Proton acceptor of the active site. Asp121 is a Mg(2+) binding site. Gln245 serves as a coordination point for substrate. Residue Asp275 coordinates Mg(2+). Substrate is bound at residue 319–321 (ESQ). Positions 502 and 539 each coordinate ATP. Residue Asn540 coordinates Mg(2+). A substrate-binding site is contributed by Ser542.

It belongs to the FGAMS family. Monomer. Part of the FGAM synthase complex composed of 1 PurL, 1 PurQ and 2 PurS subunits.

It is found in the cytoplasm. It catalyses the reaction N(2)-formyl-N(1)-(5-phospho-beta-D-ribosyl)glycinamide + L-glutamine + ATP + H2O = 2-formamido-N(1)-(5-O-phospho-beta-D-ribosyl)acetamidine + L-glutamate + ADP + phosphate + H(+). The protein operates within purine metabolism; IMP biosynthesis via de novo pathway; 5-amino-1-(5-phospho-D-ribosyl)imidazole from N(2)-formyl-N(1)-(5-phospho-D-ribosyl)glycinamide: step 1/2. Its function is as follows. Part of the phosphoribosylformylglycinamidine synthase complex involved in the purines biosynthetic pathway. Catalyzes the ATP-dependent conversion of formylglycinamide ribonucleotide (FGAR) and glutamine to yield formylglycinamidine ribonucleotide (FGAM) and glutamate. The FGAM synthase complex is composed of three subunits. PurQ produces an ammonia molecule by converting glutamine to glutamate. PurL transfers the ammonia molecule to FGAR to form FGAM in an ATP-dependent manner. PurS interacts with PurQ and PurL and is thought to assist in the transfer of the ammonia molecule from PurQ to PurL. The sequence is that of Phosphoribosylformylglycinamidine synthase subunit PurL from Lactobacillus acidophilus (strain ATCC 700396 / NCK56 / N2 / NCFM).